A 213-amino-acid chain; its full sequence is 3-demethoxyubiquinol 3-hydroxylase (213 aa).

Fe cation is bound by residues Glu-62, Glu-92, His-95, Glu-144, Glu-176, and His-179.

It belongs to the COQ7 family. Requires Fe cation as cofactor.

The protein localises to the cell membrane. It carries out the reaction a 5-methoxy-2-methyl-3-(all-trans-polyprenyl)benzene-1,4-diol + AH2 + O2 = a 3-demethylubiquinol + A + H2O. It functions in the pathway cofactor biosynthesis; ubiquinone biosynthesis. Catalyzes the hydroxylation of 2-nonaprenyl-3-methyl-6-methoxy-1,4-benzoquinol during ubiquinone biosynthesis. This chain is 3-demethoxyubiquinol 3-hydroxylase, found in Chromohalobacter salexigens (strain ATCC BAA-138 / DSM 3043 / CIP 106854 / NCIMB 13768 / 1H11).